Here is a 32-residue protein sequence, read N- to C-terminus: Cytochrome c3, 10 kDa (32 aa).

Positions 16, 25, 28, and 29 each coordinate heme.

As to quaternary structure, monomer. Post-translationally, binds 1 heme group per subunit.

It is found in the periplasm. Its function is as follows. Participates in sulfate respiration coupled with phosphorylation by transferring electrons from the enzyme dehydrogenase to ferredoxin. The sequence is that of Cytochrome c3, 10 kDa from Desulfuromonas acetoxidans (Chloropseudomonas ethylica).